The following is an 88-amino-acid chain: MLCAIYKSKKKLGSYLYVANREDFSSVPSVLLEHFGKPELVMMFNLLGRKALHNVDCNEVLETIKRQGFYLQIAKQDDGLFNSLSEIK.

A YcgL domain is found at 1–85 (MLCAIYKSKK…QDDGLFNSLS (85 aa)).

The chain is YcgL domain-containing protein HI_1446 from Haemophilus influenzae (strain ATCC 51907 / DSM 11121 / KW20 / Rd).